A 254-amino-acid polypeptide reads, in one-letter code: E3 ubiquitin-protein ligase NEURL3 (254 aa).

An NHR domain is found at 17–174 (ALSFHGDATG…TTKAIELLDP (158 aa)). The RING-type zinc finger occupies 197–236 (CVICFHNTANTRLMPCGHSQFCGSCAWHIFKDTARCPMCR).

It is found in the cytoplasm. It catalyses the reaction S-ubiquitinyl-[E2 ubiquitin-conjugating enzyme]-L-cysteine + [acceptor protein]-L-lysine = [E2 ubiquitin-conjugating enzyme]-L-cysteine + N(6)-ubiquitinyl-[acceptor protein]-L-lysine.. It participates in protein modification; protein ubiquitination. Its function is as follows. E3 ubiquitin-protein ligase that plays a role in various biological processes such as lung development or innate immunity. Seems to utilize UBE2E1. Promotes innate antiviral response by catalyzing 'Lys-63'-linked ubiquitination of IRF7. Also inhibits hepatitis C virus assembly by directly binding to viral E1 envelope glycoprotein to disrupt its interaction with E2. Plays an essential role in TLR4-mediated activation of MAPK pathways by promoting 'Lys-48'-linked polyubiquitination of the phosphatase DUSP1/MKP1. This chain is E3 ubiquitin-protein ligase NEURL3 (Neurl3), found in Rattus norvegicus (Rat).